The chain runs to 566 residues: Arginine--tRNA ligase (566 aa).

The 'HIGH' region motif lies at Ala129–His139.

It belongs to the class-I aminoacyl-tRNA synthetase family. As to quaternary structure, monomer.

It localises to the cytoplasm. The catalysed reaction is tRNA(Arg) + L-arginine + ATP = L-arginyl-tRNA(Arg) + AMP + diphosphate. In Wolbachia pipientis subsp. Culex pipiens (strain wPip), this protein is Arginine--tRNA ligase.